The following is a 273-amino-acid chain: MLTYPNIDPVALSLGPLKVHWYGLMYLLAFLCAWGLASYRAKQRDSWTSEMVSDLVFYGALGVVLGGRVGYVLFYEFDKFLANPIWLFQVWTGGMSFHGGFIGVMLAMILWCRKYQKTWFETLDFIAPCVPTGLMFGRIGNFIGAELYGREVQDPNYPFGMIFPTDPFHLVRHPSQIYQAICEGLLLFILLWWFSSKPRPRMAVSALFLMGYGVARFVVEFFREPDADQGFILFGWMTKGQILTVPMLLIGLWMIWYAYQRKVYDWGPLKTHK.

Transmembrane regions (helical) follow at residues 19-39 (VHWYGLMYLLAFLCAWGLASY), 55-75 (LVFYGALGVVLGGRVGYVLFY), 90-110 (VWTGGMSFHGGFIGVMLAMIL), 125-145 (FIAPCVPTGLMFGRIGNFIGA), 174-194 (PSQIYQAICEGLLLFILLWWF), 202-222 (MAVSALFLMGYGVARFVVEFF), and 230-250 (GFILFGWMTKGQILTVPMLLI). Residue arginine 138 coordinates a 1,2-diacyl-sn-glycero-3-phospho-(1'-sn-glycerol).

The protein belongs to the Lgt family.

It localises to the cell inner membrane. It carries out the reaction L-cysteinyl-[prolipoprotein] + a 1,2-diacyl-sn-glycero-3-phospho-(1'-sn-glycerol) = an S-1,2-diacyl-sn-glyceryl-L-cysteinyl-[prolipoprotein] + sn-glycerol 1-phosphate + H(+). Its pathway is protein modification; lipoprotein biosynthesis (diacylglyceryl transfer). Catalyzes the transfer of the diacylglyceryl group from phosphatidylglycerol to the sulfhydryl group of the N-terminal cysteine of a prolipoprotein, the first step in the formation of mature lipoproteins. The chain is Phosphatidylglycerol--prolipoprotein diacylglyceryl transferase from Acinetobacter baylyi (strain ATCC 33305 / BD413 / ADP1).